The sequence spans 423 residues: 5-hydroxytryptamine receptor 1A (423 aa).

The disordered stretch occupies residues 1–20 (MEGLSPGQGNNTTSSEGPFG). Topologically, residues 1-38 (MEGLSPGQGNNTTSSEGPFGTRGNATGISDVTFSYQVI) are extracellular. A compositionally biased stretch (polar residues) spans 7–16 (GQGNNTTSSE). Residues Asn10, Asn11, and Asn24 are each glycosylated (N-linked (GlcNAc...) asparagine). A helical membrane pass occupies residues 39 to 59 (TSLLLGTLIFCAVLGNACVVA). The Cytoplasmic portion of the chain corresponds to 60–73 (AIALERSLQNVANY). Residues 74 to 98 (LIGSLAVTDLMVSVLVLPMAALYQV) traverse the membrane as a helical segment. Residues 99 to 107 (LNKWTLGQV) lie on the Extracellular side of the membrane. A helical membrane pass occupies residues 108 to 132 (TCDLFIALDVLCCTSSILHLCAIAL). A disulfide bridge links Cys109 with Cys187. 2 residues coordinate serotonin: Asp116 and Cys120. Residues 133–135 (DRY) carry the DRY motif; important for ligand-induced conformation changes motif. Residues 133-152 (DRYWAITDPIDYVNKRTPRR) are Cytoplasmic-facing. The helical transmembrane segment at 153 to 174 (AAALISLTWLIGFLISIPPMLG) threads the bilayer. Over 175-193 (WRTPEDRSDPDACTISKDH) the chain is Extracellular. Residues 194–216 (GYTIYSTFGAFYIPLLLMLVLYG) form a helical membrane-spanning segment. At 217-346 (RIFRAARFRI…LARERKTVKT (130 aa)) the chain is on the cytoplasmic side. The tract at residues 235–277 (RKGADARSGVSPAPQPRKSVNGEPGGREWRQGPGSKAGGPLCT) is disordered. Positions 345, 346, and 352 each coordinate 1D-myo-inositol 4-phosphate. The chain crosses the membrane as a helical span at residues 347 to 370 (LGIIMGTFILCWLPFFIVALVLPF). Topologically, residues 371–378 (CESSCHMP) are extracellular. The helical transmembrane segment at 379 to 403 (TLLGAIINWLGYSNSLLNPVIYAYF) threads the bilayer. The short motif at 396 to 400 (NPVIY) is the NPxxY motif; important for ligand-induced conformation changes and signaling element. Phe403, Asn404, and Lys405 together coordinate 1D-myo-inositol 4-phosphate. Topologically, residues 404–423 (NKDFQNAFKKIVRCKFCRRR) are cytoplasmic.

Belongs to the G-protein coupled receptor 1 family. 5-hydroxytryptamine receptor subfamily. HTR1A sub-subfamily. As to quaternary structure, heterodimer; heterodimerizes with GPER1. Interacts with YIF1B. Interacts with GPR39 and GALR1.

Its subcellular location is the cell membrane. It localises to the cell projection. The protein localises to the dendrite. Its activity is regulated as follows. G-protein coupled receptor activity is regulated by lipids: phosphatidylinositol 4-phosphate increases HTR1A-mediated activity. In terms of biological role, G-protein coupled receptor for 5-hydroxytryptamine (serotonin). Also functions as a receptor for various drugs and psychoactive substances. Ligand binding causes a conformation change that triggers signaling via guanine nucleotide-binding proteins (G proteins) and modulates the activity of downstream effectors, such as adenylate cyclase. HTR1A is coupled to G(i)/G(o) G alpha proteins and mediates inhibitory neurotransmission: signaling inhibits adenylate cyclase activity and activates a phosphatidylinositol-calcium second messenger system that regulates the release of Ca(2+) ions from intracellular stores. Beta-arrestin family members regulate signaling by mediating both receptor desensitization and resensitization processes. The chain is 5-hydroxytryptamine receptor 1A (HTR1A) from Vulpes vulpes (Red fox).